The following is a 548-amino-acid chain: Chaperonin GroEL (548 aa).

ATP-binding positions include 30–33 (TLGP), K51, 87–91 (DGTTT), G415, and D495.

It belongs to the chaperonin (HSP60) family. In terms of assembly, forms a cylinder of 14 subunits composed of two heptameric rings stacked back-to-back. Interacts with the co-chaperonin GroES.

It is found in the cytoplasm. It catalyses the reaction ATP + H2O + a folded polypeptide = ADP + phosphate + an unfolded polypeptide.. Functionally, together with its co-chaperonin GroES, plays an essential role in assisting protein folding. The GroEL-GroES system forms a nano-cage that allows encapsulation of the non-native substrate proteins and provides a physical environment optimized to promote and accelerate protein folding. This is Chaperonin GroEL from Erwinia tasmaniensis (strain DSM 17950 / CFBP 7177 / CIP 109463 / NCPPB 4357 / Et1/99).